We begin with the raw amino-acid sequence, 191 residues long: GDP-mannose pyrophosphatase (191 aa).

GDP-alpha-D-mannose-binding positions include Tyr17, 38–40, Arg67, and 85–87; these read KRE and AGL. One can recognise a Nudix hydrolase domain in the interval 43–180; the sequence is DRGNGATILL…EIRDGKTVLL (138 aa). Mg(2+) is bound by residues Ala85, Glu100, and Glu104. The Nudix box signature appears at 86-106; it reads GLLDNDEPEACIRKEAIEETG. GDP-alpha-D-mannose-binding positions include Glu104, Glu127, 150-151, and Lys176; that span reads DE. Residue Glu151 coordinates Mg(2+).

It belongs to the Nudix hydrolase family. NudK subfamily. In terms of assembly, homodimer. Mg(2+) serves as cofactor.

The enzyme catalyses GDP-alpha-D-mannose + H2O = alpha-D-mannose 1-phosphate + GMP + 2 H(+). Its function is as follows. Nucleoside diphosphate sugar hydrolase that hydrolyzes GDP-mannose as its preferred substrate, yielding GMP and mannose-1-phosphate. This Citrobacter koseri (strain ATCC BAA-895 / CDC 4225-83 / SGSC4696) protein is GDP-mannose pyrophosphatase (nudK).